The chain runs to 1259 residues: Neural cell adhesion molecule L1 (1259 aa).

A signal peptide spans 1 to 19; the sequence is MVMMLWYVLPLLLCSPCLL. Residues 20 to 1122 lie on the Extracellular side of the membrane; sequence IQIPDEYKGH…VSTTGSFASE (1103 aa). 6 Ig-like C2-type domains span residues 35 to 128, 138 to 225, 239 to 327, 332 to 419, 424 to 506, and 517 to 600; these read PVIT…HEIQ, PKET…EPID, PRLL…YYVT, PYWL…AYIY, PARI…NNVT, and TQIT…DEVE. 2 disulfide bridges follow: Cys-57-Cys-113 and Cys-157-Cys-208. N-linked (GlcNAc...) asparagine glycans are attached at residues Asn-100, Asn-202, Asn-246, and Asn-293. 2 disulfides stabilise this stretch: Cys-263–Cys-311 and Cys-353–Cys-403. N-linked (GlcNAc...) asparagine glycosylation is found at Asn-432, Asn-489, and Asn-504. Residues Cys-447 and Cys-496 are joined by a disulfide bond. Residues Cys-538 and Cys-590 are joined by a disulfide bond. 2 short sequence motifs (cell attachment site) span residues 553–555 and 562–564; these read RGD. 5 Fibronectin type-III domains span residues 613–711, 716–809, 811–916, 919–1014, and 1016–1116; these read PVPH…TPEA, NPVD…SGED, PQVS…PEGV, HPEA…MALF, and KPDF…VSTT. An N-linked (GlcNAc...) asparagine glycan is attached at Asn-670. Positions 697–724 are disordered; that stretch reads GEPSPVSETVVTPEAAPEKNPVDVRGEG. Over residues 712–724 the composition is skewed to basic and acidic residues; that stretch reads APEKNPVDVRGEG. Asn-725, Asn-776, Asn-824, Asn-848, Asn-875, Asn-968, Asn-978, Asn-1021, Asn-1029, Asn-1072, and Asn-1106 each carry an N-linked (GlcNAc...) asparagine glycan. Residues 1123 to 1145 traverse the membrane as a helical segment; it reads GWFIAFVSAIILLLLILLILCFI. The Cytoplasmic segment spans residues 1146-1259; it reads KRSKGGKYSV…SPINPAVALE (114 aa). A phosphoserine mark is found at Ser-1165, Arg-1179, Ser-1180, Ser-1183, Ser-1196, Ser-1245, Ser-1246, and Ser-1250. 2 disordered regions span residues 1182 to 1209 and 1228 to 1259; these read ESDNEEKAFGSSQPSLNGDIKPLGSDDS and IGQYSGKKEKEAAGGNDSSGATSPINPAVALE. The span at 1243–1252 shows a compositional bias: polar residues; that stretch reads NDSSGATSPI.

Belongs to the immunoglobulin superfamily. L1/neurofascin/NgCAM family. As to quaternary structure, interacts with SHTN1; the interaction occurs in axonal growth cones. Interacts with isoform 2 of BSG. In terms of tissue distribution, isoform 2 is predominantly found in the brain, while isoform 1 is found in the peripheral nervous system.

It is found in the cell membrane. The protein resides in the cell projection. Its subcellular location is the growth cone. Functionally, neural cell adhesion molecule involved in the dynamics of cell adhesion and in the generation of transmembrane signals at tyrosine kinase receptors. During brain development, critical in multiple processes, including neuronal migration, axonal growth and fasciculation, and synaptogenesis. In the mature brain, plays a role in the dynamics of neuronal structure and function, including synaptic plasticity. This Rattus norvegicus (Rat) protein is Neural cell adhesion molecule L1 (L1cam).